The sequence spans 37 residues: Photosystem I reaction center subunit VIII (37 aa).

A helical membrane pass occupies residues 7-27; sequence LPSIFVPLVGLVFPAIAMASL.

Belongs to the PsaI family.

The protein resides in the plastid. Its subcellular location is the chloroplast thylakoid membrane. May help in the organization of the PsaL subunit. This chain is Photosystem I reaction center subunit VIII, found in Populus alba (White poplar).